The sequence spans 401 residues: Enolase (401 aa).

Residue Gln-154 coordinates (2R)-2-phosphoglycerate. Glu-196 acts as the Proton donor in catalysis. Positions 232, 275, and 302 each coordinate Mg(2+). (2R)-2-phosphoglycerate-binding residues include Lys-327, Arg-356, Ser-357, and Lys-378. The active-site Proton acceptor is the Lys-327.

It belongs to the enolase family. The cofactor is Mg(2+).

It is found in the cytoplasm. The protein resides in the secreted. Its subcellular location is the cell surface. The enzyme catalyses (2R)-2-phosphoglycerate = phosphoenolpyruvate + H2O. The protein operates within carbohydrate degradation; glycolysis; pyruvate from D-glyceraldehyde 3-phosphate: step 4/5. Catalyzes the reversible conversion of 2-phosphoglycerate (2-PG) into phosphoenolpyruvate (PEP). It is essential for the degradation of carbohydrates via glycolysis. In Haloarcula marismortui (strain ATCC 43049 / DSM 3752 / JCM 8966 / VKM B-1809) (Halobacterium marismortui), this protein is Enolase.